A 176-amino-acid polypeptide reads, in one-letter code: Large ribosomal subunit protein uL6 (176 aa).

It belongs to the universal ribosomal protein uL6 family. As to quaternary structure, part of the 50S ribosomal subunit.

This protein binds to the 23S rRNA, and is important in its secondary structure. It is located near the subunit interface in the base of the L7/L12 stalk, and near the tRNA binding site of the peptidyltransferase center. In Shewanella sediminis (strain HAW-EB3), this protein is Large ribosomal subunit protein uL6.